The sequence spans 785 residues: Semaphorin-3E (785 aa).

An N-terminal signal peptide occupies residues 1 to 25 (MLGRMASAQDLLILALCGLLLELPA). The region spanning 36–520 (RLRLSHKELW…TESVIAQVKF (485 aa)) is the Sema domain. Asparagine 48 is a glycosylation site (N-linked (GlcNAc...) asparagine). The cysteines at positions 109 and 119 are disulfide-linked. An N-linked (GlcNAc...) asparagine glycan is attached at asparagine 130. 4 cysteine pairs are disulfide-bonded: cysteine 137-cysteine 146, cysteine 274-cysteine 386, cysteine 298-cysteine 346, and cysteine 523-cysteine 541. Residue asparagine 600 is glycosylated (N-linked (GlcNAc...) asparagine). The Ig-like C2-type domain maps to 651–740 (LDAGTYFCQT…EYCEKVWCTD (90 aa)). An intrachain disulfide couples cysteine 658 to cysteine 733. The interval 744–785 (KKLKMSPSKWKYANPQEKRQDQEKKARIRPEHYRLPRNIADS) is disordered. Positions 759–777 (QEKRQDQEKKARIRPEHYR) are enriched in basic and acidic residues.

This sequence belongs to the semaphorin family. Collapsin-1, -2, -3, and -5 bind to overlapping but distinct axon tracts.

It localises to the secreted. In terms of biological role, plays an important role in signaling via the cell surface receptor PLXND1. Mediates reorganization of the actin cytoskeleton, leading to the retraction of cell projections. Promotes focal adhesion disassembly and inhibits adhesion of endothelial cells to the extracellular matrix. Regulates angiogenesis. Can down-regulate sprouting angiogenesis. Required for normal vascular patterning during embryogenesis. Induces the collapse and paralysis of neuronal growth cones. Plays an important role in ensuring the specificity of synapse formation. This Gallus gallus (Chicken) protein is Semaphorin-3E (SEMA3E).